The primary structure comprises 354 residues: tRNA pseudouridine synthase D (354 aa).

Catalysis depends on aspartate 86, which acts as the Nucleophile. One can recognise a TRUD domain in the interval 162–309 (GVPNYFGPQR…LEVGRRALRL (148 aa)).

Belongs to the pseudouridine synthase TruD family.

It carries out the reaction uridine(13) in tRNA = pseudouridine(13) in tRNA. Its function is as follows. Responsible for synthesis of pseudouridine from uracil-13 in transfer RNAs. The protein is tRNA pseudouridine synthase D of Methylococcus capsulatus (strain ATCC 33009 / NCIMB 11132 / Bath).